A 391-amino-acid chain; its full sequence is MATKTCYYEVLKVERTATKQQVDRAYRKLAIKYHPDSNRDDGSATAKFKEATEAYEVLSDANKRARYDQYGHAGVEGATQQYGDVEDIFEAFGDLFGGGFGDFFGGGSRRGGGRRRVRRGADVRCDVTLTLEEAARGCHKDIVFRRRVSCDTCDGSGAAAGSEPVTCTMCGGQGQVIQSAGILRVQTTCPTCKGAGKQIGEPCGKCRGTGTQNEKAEMNVEIPAGVDDGMRVRLQGEGEPSPDGGPNGDCYCFISVKEHNLFKREGQHLILQMPISYAQAALGATINVPTLDGPHELTVPAGTQTGHVFTVRGQGIVDPRSGRTGDLLVQIFIEVPKKLSDKQQKLLRELAELDHDSVLPERTSFLDKLRHFFDPEPEEAGTGSTDTEKDS.

Residues 6–71 enclose the J domain; that stretch reads CYYEVLKVER…NKRARYDQYG (66 aa). The CR-type zinc-finger motif lies at 137–215; sequence GCHKDIVFRR…CRGTGTQNEK (79 aa). Residues Cys150, Cys153, Cys167, Cys170, Cys189, Cys192, Cys203, and Cys206 each contribute to the Zn(2+) site. CXXCXGXG motif repeat units lie at residues 150–157, 167–174, 189–196, and 203–210; these read CDTCDGSG, CTMCGGQG, CPTCKGAG, and CGKCRGTG. Residues 372 to 391 form a disordered region; sequence FFDPEPEEAGTGSTDTEKDS.

Belongs to the DnaJ family. In terms of assembly, homodimer. Requires Zn(2+) as cofactor.

Its subcellular location is the cytoplasm. Functionally, participates actively in the response to hyperosmotic and heat shock by preventing the aggregation of stress-denatured proteins and by disaggregating proteins, also in an autonomous, DnaK-independent fashion. Unfolded proteins bind initially to DnaJ; upon interaction with the DnaJ-bound protein, DnaK hydrolyzes its bound ATP, resulting in the formation of a stable complex. GrpE releases ADP from DnaK; ATP binding to DnaK triggers the release of the substrate protein, thus completing the reaction cycle. Several rounds of ATP-dependent interactions between DnaJ, DnaK and GrpE are required for fully efficient folding. Also involved, together with DnaK and GrpE, in the DNA replication of plasmids through activation of initiation proteins. This is Chaperone protein DnaJ from Rhodopirellula baltica (strain DSM 10527 / NCIMB 13988 / SH1).